Reading from the N-terminus, the 464-residue chain is tRNA modification GTPase MnmE (464 aa).

(6S)-5-formyl-5,6,7,8-tetrahydrofolate contacts are provided by arginine 29, glutamate 91, and arginine 131. Residues 226–387 (GLKVALAGKP…LINYLLKKCG (162 aa)) enclose the TrmE-type G domain. Asparagine 236 lines the K(+) pocket. GTP contacts are provided by residues 236–241 (NVGKSS), 255–261 (TDLPGTT), and 280–283 (DTAG). Residue serine 240 coordinates Mg(2+). K(+)-binding residues include threonine 255, leucine 257, and threonine 260. Threonine 261 contributes to the Mg(2+) binding site. (6S)-5-formyl-5,6,7,8-tetrahydrofolate is bound at residue lysine 464.

It belongs to the TRAFAC class TrmE-Era-EngA-EngB-Septin-like GTPase superfamily. TrmE GTPase family. As to quaternary structure, homodimer. Heterotetramer of two MnmE and two MnmG subunits. K(+) is required as a cofactor.

It is found in the cytoplasm. Its function is as follows. Exhibits a very high intrinsic GTPase hydrolysis rate. Involved in the addition of a carboxymethylaminomethyl (cmnm) group at the wobble position (U34) of certain tRNAs, forming tRNA-cmnm(5)s(2)U34. The sequence is that of tRNA modification GTPase MnmE from Prochlorococcus marinus (strain NATL1A).